A 428-amino-acid chain; its full sequence is MSNIVIVGAQWGDEGKGKIADTLAEKADLVVRYQGGNNAGHTLVVNGKKTFLHLIPSGVLHQHTKCVIGHGVVLDPVALDEEITRLQAKGIAISAENLFVSESCTIITSYHKLLDAVRESNTSEKIGTTGKGIGPAYEDKVSRKGIKFKHLFDKDLLRSRLAISLAEKETLFRDLYKVEYPTLEQEFDKLFALGQKLKQYAADTFSIIDKAIAAGKNVVYEGAQGVLLDVDYGTYPFVTSSNTSVAGVYSGATTAGHGFDHVIGITKAYTTRVGEGPFPTELFDDVGKFIQHKGGEIGVTTGRIRRCGWLDLPLLKYSAKCSNLTSIALTKVDVLSDMDTLKVCIGYKYEGKEIYCAYPGIDLYKVEPILVEMEPFSIDETVTKDNMPAALKTYLETIENHVGIPISSLAYGPSREQILFFEDYFKKG.

Residues Gly-12 to Lys-18 and Gly-40 to Thr-42 contribute to the GTP site. Asp-13 serves as the catalytic Proton acceptor. Residues Asp-13 and Gly-40 each coordinate Mg(2+). Residues Asp-13 to Lys-16, Asn-38 to His-41, Thr-129, Arg-143, Gln-224, Thr-239, and Arg-303 contribute to the IMP site. The active-site Proton donor is the His-41. Residue Val-299–Arg-305 participates in substrate binding. Residues Arg-305, Lys-331–Asp-333, and Ala-410–Gly-412 each bind GTP.

This sequence belongs to the adenylosuccinate synthetase family. Homodimer. Mg(2+) is required as a cofactor.

Its subcellular location is the cytoplasm. It catalyses the reaction IMP + L-aspartate + GTP = N(6)-(1,2-dicarboxyethyl)-AMP + GDP + phosphate + 2 H(+). It participates in purine metabolism; AMP biosynthesis via de novo pathway; AMP from IMP: step 1/2. In terms of biological role, plays an important role in the de novo pathway of purine nucleotide biosynthesis. Catalyzes the first committed step in the biosynthesis of AMP from IMP. The chain is Adenylosuccinate synthetase from Francisella tularensis subsp. mediasiatica (strain FSC147).